The primary structure comprises 297 residues: Small ribosomal subunit protein uS2 (297 aa).

Low complexity predominate over residues 263-289 (AAPTSWEADGGDWAASSAAPAGESWAE). The disordered stretch occupies residues 263–297 (AAPTSWEADGGDWAASSAAPAGESWAETQPAEAKW).

This sequence belongs to the universal ribosomal protein uS2 family. As to quaternary structure, component of the small ribosomal subunit. Mature ribosomes consist of a small (40S) and a large (60S) subunit. The 40S subunit contains about 33 different proteins and 1 molecule of RNA (18S). The 60S subunit contains about 49 different proteins and 3 molecules of RNA (25S, 5.8S and 5S). Interacts with rps21.

The protein resides in the cytoplasm. In terms of biological role, required for the assembly and/or stability of the 40S ribosomal subunit. Required for the processing of the 20S rRNA-precursor to mature 18S rRNA in a late step of the maturation of 40S ribosomal subunits. This chain is Small ribosomal subunit protein uS2 (rps0), found in Neosartorya fischeri (strain ATCC 1020 / DSM 3700 / CBS 544.65 / FGSC A1164 / JCM 1740 / NRRL 181 / WB 181) (Aspergillus fischerianus).